We begin with the raw amino-acid sequence, 342 residues long: Heat-inducible transcription repressor HrcA (342 aa).

It belongs to the HrcA family.

Functionally, negative regulator of class I heat shock genes (grpE-dnaK-dnaJ and groELS operons). Prevents heat-shock induction of these operons. The sequence is that of Heat-inducible transcription repressor HrcA from Shouchella clausii (strain KSM-K16) (Alkalihalobacillus clausii).